A 127-amino-acid polypeptide reads, in one-letter code: Large ribosomal subunit protein eL32B (127 aa).

It belongs to the eukaryotic ribosomal protein eL32 family. Component of the large ribosomal subunit (LSU). Mature yeast ribosomes consist of a small (40S) and a large (60S) subunit. The 40S small subunit contains 1 molecule of ribosomal RNA (18S rRNA) and at least 33 different proteins. The large 60S subunit contains 3 rRNA molecules (25S, 5.8S and 5S rRNA) and at least 46 different proteins.

The protein localises to the cytoplasm. The protein resides in the nucleus. It localises to the nucleolus. Its function is as follows. Component of the ribosome, a large ribonucleoprotein complex responsible for the synthesis of proteins in the cell. The small ribosomal subunit (SSU) binds messenger RNAs (mRNAs) and translates the encoded message by selecting cognate aminoacyl-transfer RNA (tRNA) molecules. The large subunit (LSU) contains the ribosomal catalytic site termed the peptidyl transferase center (PTC), which catalyzes the formation of peptide bonds, thereby polymerizing the amino acids delivered by tRNAs into a polypeptide chain. The nascent polypeptides leave the ribosome through a tunnel in the LSU and interact with protein factors that function in enzymatic processing, targeting, and the membrane insertion of nascent chains at the exit of the ribosomal tunnel. This chain is Large ribosomal subunit protein eL32B (rpl3201), found in Schizosaccharomyces pombe (strain 972 / ATCC 24843) (Fission yeast).